The sequence spans 251 residues: Cell division protein ZapD (251 aa).

This sequence belongs to the ZapD family. As to quaternary structure, interacts with FtsZ.

The protein resides in the cytoplasm. Functionally, cell division factor that enhances FtsZ-ring assembly. Directly interacts with FtsZ and promotes bundling of FtsZ protofilaments, with a reduction in FtsZ GTPase activity. The protein is Cell division protein ZapD of Burkholderia thailandensis (strain ATCC 700388 / DSM 13276 / CCUG 48851 / CIP 106301 / E264).